The primary structure comprises 126 residues: Aspartate 1-decarboxylase (126 aa).

Serine 25 serves as the catalytic Schiff-base intermediate with substrate; via pyruvic acid. Pyruvic acid (Ser) is present on serine 25. A substrate-binding site is contributed by threonine 57. The active-site Proton donor is the tyrosine 58. Substrate is bound at residue 73–75 (GAA).

It belongs to the PanD family. Heterooctamer of four alpha and four beta subunits. Pyruvate serves as cofactor. In terms of processing, is synthesized initially as an inactive proenzyme, which is activated by self-cleavage at a specific serine bond to produce a beta-subunit with a hydroxyl group at its C-terminus and an alpha-subunit with a pyruvoyl group at its N-terminus.

Its subcellular location is the cytoplasm. The enzyme catalyses L-aspartate + H(+) = beta-alanine + CO2. It participates in cofactor biosynthesis; (R)-pantothenate biosynthesis; beta-alanine from L-aspartate: step 1/1. Functionally, catalyzes the pyruvoyl-dependent decarboxylation of aspartate to produce beta-alanine. This chain is Aspartate 1-decarboxylase, found in Pseudomonas aeruginosa (strain LESB58).